The chain runs to 422 residues: Probable ornithine aminotransferase, mitochondrial (422 aa).

Lys273 carries the N6-(pyridoxal phosphate)lysine modification.

The protein belongs to the class-III pyridoxal-phosphate-dependent aminotransferase family. The cofactor is pyridoxal 5'-phosphate.

The protein localises to the mitochondrion matrix. The enzyme catalyses a 2-oxocarboxylate + L-ornithine = L-glutamate 5-semialdehyde + an L-alpha-amino acid. Its pathway is amino-acid biosynthesis; L-proline biosynthesis; L-glutamate 5-semialdehyde from L-ornithine: step 1/1. This chain is Probable ornithine aminotransferase, mitochondrial, found in Caenorhabditis elegans.